The primary structure comprises 692 residues: Serine/threonine-protein phosphatase PP-Z1 (692 aa).

Disordered stretches follow at residues 1-309 and 321-357; these read MGNS…DIEN and ENVN…PKKF. Residue Gly2 is the site of N-myristoyl glycine attachment. Low complexity-rich tracts occupy residues 32-41, 49-69, and 91-122; these read SHSVKSAKSN, SLPS…STPS, and SSSH…RRSS. A Phosphoserine modification is found at Ser49. Positions 170–179 are enriched in acidic residues; the sequence is LTDDDNDDKD. Thr171 is subject to Phosphothreonine. The segment covering 190–204 has biased composition (low complexity); that stretch reads RSSNSRPSSIRSGSV. Basic and acidic residues predominate over residues 207–216; it reads RKSDVTHEEP. Phosphoserine is present on residues Ser209 and Ser222. Composition is skewed to polar residues over residues 217-229 and 251-267; these read NNGS…QENY and FGSD…NSPG. Position 261 is a phosphothreonine (Thr261). Ser265 is modified (phosphoserine). Positions 280–289 are enriched in low complexity; that stretch reads TSNSTSSLNH. Basic and acidic residues predominate over residues 291–303; it reads SSRDIYPSKHISN. The segment covering 321 to 331 has biased composition (polar residues); that stretch reads ENVNDKNNNIT. 4 residues coordinate Mn(2+): Asp419, His421, Asp447, and Asn479. Residue His480 is the Proton donor of the active site. The Mn(2+) site is built by His528 and His603. Positions 672 to 692 are disordered; sequence LANQQQQMMETSITNDNESQQ. Residues 673-692 show a composition bias toward polar residues; the sequence is ANQQQQMMETSITNDNESQQ. Ser690 carries the post-translational modification Phosphoserine.

It belongs to the PPP phosphatase family. PP-Z subfamily. As to quaternary structure, interacts with SIS2 and VHS3, which regulate its activity. Requires Mn(2+) as cofactor.

It carries out the reaction O-phospho-L-seryl-[protein] + H2O = L-seryl-[protein] + phosphate. The enzyme catalyses O-phospho-L-threonyl-[protein] + H2O = L-threonyl-[protein] + phosphate. Inhibited by the regulatory subunits VHS3 and SIS2. Its function is as follows. Essential for the maintenance of cell size and integrity in response to osmotic stress. The chain is Serine/threonine-protein phosphatase PP-Z1 (PPZ1) from Saccharomyces cerevisiae (strain ATCC 204508 / S288c) (Baker's yeast).